Reading from the N-terminus, the 283-residue chain is Pantothenate synthetase (283 aa).

Met30 to His37 provides a ligand contact to ATP. Catalysis depends on His37, which acts as the Proton donor. Gln61 is a binding site for (R)-pantoate. Beta-alanine is bound at residue Gln61. Residue Gly147 to Asp150 participates in ATP binding. Gln153 contributes to the (R)-pantoate binding site. ATP-binding positions include Val176 and Leu184–Arg187.

This sequence belongs to the pantothenate synthetase family. In terms of assembly, homodimer.

It localises to the cytoplasm. The enzyme catalyses (R)-pantoate + beta-alanine + ATP = (R)-pantothenate + AMP + diphosphate + H(+). It participates in cofactor biosynthesis; (R)-pantothenate biosynthesis; (R)-pantothenate from (R)-pantoate and beta-alanine: step 1/1. Functionally, catalyzes the condensation of pantoate with beta-alanine in an ATP-dependent reaction via a pantoyl-adenylate intermediate. The protein is Pantothenate synthetase of Moorella thermoacetica (strain ATCC 39073 / JCM 9320).